A 100-amino-acid polypeptide reads, in one-letter code: Large ribosomal subunit protein uL23 (100 aa).

Belongs to the universal ribosomal protein uL23 family. Part of the 50S ribosomal subunit. Contacts protein L29, and trigger factor when it is bound to the ribosome.

Its function is as follows. One of the early assembly proteins it binds 23S rRNA. One of the proteins that surrounds the polypeptide exit tunnel on the outside of the ribosome. Forms the main docking site for trigger factor binding to the ribosome. The polypeptide is Large ribosomal subunit protein uL23 (Acaryochloris marina (strain MBIC 11017)).